The primary structure comprises 270 residues: Regulatory protein RecX (270 aa).

It belongs to the RecX family.

It is found in the cytoplasm. In terms of biological role, modulates RecA activity. The polypeptide is Regulatory protein RecX (Bacillus cereus (strain ZK / E33L)).